Consider the following 134-residue polypeptide: Galectin-1 (134 aa).

Residue A1 is modified to N-acetylalanine. The region spanning 4-134 (GVAVTNLNLK…GLAFKSITTE (131 aa)) is the Galectin domain. A beta-D-galactoside is bound by residues 45–49 (HFNAR), H53, N62, and 69–72 (WGSE).

As to quaternary structure, homodimer.

The protein resides in the secreted. It is found in the extracellular space. It localises to the extracellular matrix. May regulate cell apoptosis and cell differentiation. Binds beta-galactoside and a wide array of complex carbohydrates. The polypeptide is Galectin-1 (Rhinella arenarum (Argentine common toad)).